The following is a 327-amino-acid chain: GMP reductase (327 aa).

The active-site Thioimidate intermediate is the cysteine 176. 205–228 (IIADGGIRTHGDIAKSIRFGASMV) serves as a coordination point for NADP(+).

The protein belongs to the IMPDH/GMPR family. GuaC type 2 subfamily.

It carries out the reaction IMP + NH4(+) + NADP(+) = GMP + NADPH + 2 H(+). Its function is as follows. Catalyzes the irreversible NADPH-dependent deamination of GMP to IMP. It functions in the conversion of nucleobase, nucleoside and nucleotide derivatives of G to A nucleotides, and in maintaining the intracellular balance of A and G nucleotides. This Streptococcus pyogenes serotype M49 (strain NZ131) protein is GMP reductase.